Here is a 235-residue protein sequence, read N- to C-terminus: 1-(5-phosphoribosyl)-5-[(5-phosphoribosylamino)methylideneamino] imidazole-4-carboxamide isomerase (235 aa).

The active-site Proton acceptor is the aspartate 8. Aspartate 129 acts as the Proton donor in catalysis.

Belongs to the HisA/HisF family.

The protein localises to the cytoplasm. The catalysed reaction is 1-(5-phospho-beta-D-ribosyl)-5-[(5-phospho-beta-D-ribosylamino)methylideneamino]imidazole-4-carboxamide = 5-[(5-phospho-1-deoxy-D-ribulos-1-ylimino)methylamino]-1-(5-phospho-beta-D-ribosyl)imidazole-4-carboxamide. Its pathway is amino-acid biosynthesis; L-histidine biosynthesis; L-histidine from 5-phospho-alpha-D-ribose 1-diphosphate: step 4/9. This is 1-(5-phosphoribosyl)-5-[(5-phosphoribosylamino)methylideneamino] imidazole-4-carboxamide isomerase from Thermoanaerobacter sp. (strain X514).